The following is a 440-amino-acid chain: Deoxyguanosinetriphosphate triphosphohydrolase-like protein (440 aa).

In terms of domain architecture, HD spans 62-255 (RLTHSLEAAQ…MELADDIAYG (194 aa)).

It belongs to the dGTPase family. Type 2 subfamily.

This chain is Deoxyguanosinetriphosphate triphosphohydrolase-like protein, found in Vibrio parahaemolyticus serotype O3:K6 (strain RIMD 2210633).